The sequence spans 438 residues: Glycosyl hydrolase family 109 protein (438 aa).

A signal peptide (tat-type signal) is located at residues 1-33; it reads MDKTSRRDLLKLASLAGIGAGLARSQGSSKSMA. Residues 52-53, D74, 125-128, 145-146, and N174 contribute to the NAD(+) site; these read GR, WVWH, and EV. Substrate is bound by residues Y203, R221, 233–236, and Y315; that span reads YPTH. NAD(+) is bound at residue Y233. Residues 408-438 are disordered; sequence GPLSEASVANGSAPQKFPDFTRGKWQTRQPV.

It belongs to the Gfo/Idh/MocA family. Glycosyl hydrolase 109 subfamily. Requires NAD(+) as cofactor. In terms of processing, predicted to be exported by the Tat system. The position of the signal peptide cleavage has not been experimentally proven.

Functionally, glycosidase. The sequence is that of Glycosyl hydrolase family 109 protein from Solibacter usitatus (strain Ellin6076).